Consider the following 281-residue polypeptide: Formamidopyrimidine-DNA glycosylase (281 aa).

Proline 2 functions as the Schiff-base intermediate with DNA in the catalytic mechanism. The Proton donor role is filled by glutamate 3. Residue lysine 58 is the Proton donor; for beta-elimination activity of the active site. Histidine 94, arginine 113, and arginine 156 together coordinate DNA. The FPG-type; degenerate zinc-finger motif lies at 241-281 (AVYDRVGQPCPGCDCDVARTGGIERMVQSGRSTFFCGRRQR). The Proton donor; for delta-elimination activity role is filled by arginine 271.

It belongs to the FPG family. As to quaternary structure, monomer. The cofactor is Zn(2+).

It catalyses the reaction Hydrolysis of DNA containing ring-opened 7-methylguanine residues, releasing 2,6-diamino-4-hydroxy-5-(N-methyl)formamidopyrimidine.. The enzyme catalyses 2'-deoxyribonucleotide-(2'-deoxyribose 5'-phosphate)-2'-deoxyribonucleotide-DNA = a 3'-end 2'-deoxyribonucleotide-(2,3-dehydro-2,3-deoxyribose 5'-phosphate)-DNA + a 5'-end 5'-phospho-2'-deoxyribonucleoside-DNA + H(+). Its function is as follows. Involved in base excision repair of DNA damaged by oxidation or by mutagenic agents. Acts as a DNA glycosylase that recognizes and removes damaged bases. Has a preference for oxidized purines, such as 7,8-dihydro-8-oxoguanine (8-oxoG). Has AP (apurinic/apyrimidinic) lyase activity and introduces nicks in the DNA strand. Cleaves the DNA backbone by beta-delta elimination to generate a single-strand break at the site of the removed base with both 3'- and 5'-phosphates. The chain is Formamidopyrimidine-DNA glycosylase from Rhodospirillum rubrum (strain ATCC 11170 / ATH 1.1.1 / DSM 467 / LMG 4362 / NCIMB 8255 / S1).